We begin with the raw amino-acid sequence, 373 residues long: 3-dehydroquinate synthase (373 aa).

Residues D74 to K79, G108 to D112, T132 to T133, K145, K154, and T172 to T175 contribute to the NAD(+) site. E187, H250, and H266 together coordinate Zn(2+).

The protein belongs to the sugar phosphate cyclases superfamily. Dehydroquinate synthase family. Co(2+) serves as cofactor. Zn(2+) is required as a cofactor. It depends on NAD(+) as a cofactor.

It is found in the cytoplasm. It catalyses the reaction 7-phospho-2-dehydro-3-deoxy-D-arabino-heptonate = 3-dehydroquinate + phosphate. It participates in metabolic intermediate biosynthesis; chorismate biosynthesis; chorismate from D-erythrose 4-phosphate and phosphoenolpyruvate: step 2/7. Catalyzes the conversion of 3-deoxy-D-arabino-heptulosonate 7-phosphate (DAHP) to dehydroquinate (DHQ). The chain is 3-dehydroquinate synthase from Nocardia farcinica (strain IFM 10152).